The following is a 358-amino-acid chain: Chorismate synthase (358 aa).

Arg46 contacts NADP(+). Residues 123–125, 235–236, Gly275, 290–294, and Arg316 contribute to the FMN site; these read RSS, NA, and KPTPS.

The protein belongs to the chorismate synthase family. In terms of assembly, homotetramer. It depends on FMNH2 as a cofactor.

The enzyme catalyses 5-O-(1-carboxyvinyl)-3-phosphoshikimate = chorismate + phosphate. The protein operates within metabolic intermediate biosynthesis; chorismate biosynthesis; chorismate from D-erythrose 4-phosphate and phosphoenolpyruvate: step 7/7. Functionally, catalyzes the anti-1,4-elimination of the C-3 phosphate and the C-6 proR hydrogen from 5-enolpyruvylshikimate-3-phosphate (EPSP) to yield chorismate, which is the branch point compound that serves as the starting substrate for the three terminal pathways of aromatic amino acid biosynthesis. This reaction introduces a second double bond into the aromatic ring system. In Helicobacter hepaticus (strain ATCC 51449 / 3B1), this protein is Chorismate synthase.